We begin with the raw amino-acid sequence, 111 residues long: Iron-sulfur cluster insertion protein ErpA (111 aa).

The iron-sulfur cluster site is built by cysteine 39, cysteine 103, and cysteine 105.

This sequence belongs to the HesB/IscA family. As to quaternary structure, homodimer. Iron-sulfur cluster is required as a cofactor.

Required for insertion of 4Fe-4S clusters for at least IspG. This is Iron-sulfur cluster insertion protein ErpA from Buchnera aphidicola subsp. Cinara cedri (strain Cc).